The chain runs to 247 residues: Adenosylcobinamide-GDP ribazoletransferase (247 aa).

The next 5 membrane-spanning stretches (helical) occupy residues 34–54 (IITF…VFMV), 59–79 (CGVP…TGGF), 113–133 (GGLA…ELTL), 138–158 (ILAS…LLMY), and 194–214 (VLLP…AIFI).

It belongs to the CobS family. The cofactor is Mg(2+).

The protein localises to the cell inner membrane. It catalyses the reaction alpha-ribazole + adenosylcob(III)inamide-GDP = adenosylcob(III)alamin + GMP + H(+). The enzyme catalyses alpha-ribazole 5'-phosphate + adenosylcob(III)inamide-GDP = adenosylcob(III)alamin 5'-phosphate + GMP + H(+). Its pathway is cofactor biosynthesis; adenosylcobalamin biosynthesis; adenosylcobalamin from cob(II)yrinate a,c-diamide: step 7/7. In terms of biological role, joins adenosylcobinamide-GDP and alpha-ribazole to generate adenosylcobalamin (Ado-cobalamin). Also synthesizes adenosylcobalamin 5'-phosphate from adenosylcobinamide-GDP and alpha-ribazole 5'-phosphate. The sequence is that of Adenosylcobinamide-GDP ribazoletransferase from Escherichia coli O127:H6 (strain E2348/69 / EPEC).